A 434-amino-acid chain; its full sequence is Putative F-box/FBD/LRR-repeat protein At1g16940 (434 aa).

The F-box domain occupies 10-66; sequence HNIINQLPDSLLCEIFFNLPTEEVVKTSLICRRWRYVWQSLPGLDLVINGSKNYDKF. LRR repeat units follow at residues 72 to 99, 114 to 141, 164 to 189, 204 to 231, 252 to 277, and 306 to 331; these read FMFL…MMNN, RRYV…KLHR, INFV…TMDK, CLTN…KLNR, DVAY…TISF, and MAVG…VMGF. The 50-residue stretch at 336–385 folds into the FBD domain; the sequence is WGINFSDVPQCVLSSLEFVEVKAREVADMKKLWSYFMENSTVLKKFTLCL.

The sequence is that of Putative F-box/FBD/LRR-repeat protein At1g16940 from Arabidopsis thaliana (Mouse-ear cress).